A 426-amino-acid polypeptide reads, in one-letter code: Protein sum2 (426 aa).

A Sm domain is found at 1-80 (MTEFIGSRIS…VKDLRIEEPA (80 aa)). Disordered regions lie at residues 79 to 100 (PATTPSAPPVQPPNDPAIIGSN), 204 to 305 (GMPS…AKPR), and 348 to 426 (SCES…ANDQ). The segment covering 84 to 93 (SAPPVQPPND) has biased composition (pro residues). Positions 226–237 (VSASPSLQSMPP) are enriched in polar residues. The segment covering 261-278 (RNSTVTNDRVVNTTVDVS) has biased composition (low complexity). A compositionally biased stretch (polar residues) spans 279–298 (QSQTVETSGPSKEVPTTQPD). In terms of domain architecture, DFDF spans 296–332 (QPDASAAKPRTEFDFQTANQKFQSMKDDLLKGKNDEE). The FFD box motif lies at 335–351 (EFYKPKQSFFDNISCES). Residues 350 to 371 (ESKEKGMEAADRRALRDRERSL) are compositionally biased toward basic and acidic residues. Residues 360 to 380 (DRRALRDRERSLNMETFGVAG) carry the TFG box motif. Basic residues predominate over residues 384–401 (RGRRGRGRGRGGRGRGRG). The span at 405–426 (NQYNQYRNSNGSQPRAQPANDQ) shows a compositional bias: polar residues.

Functionally, required for G2/M phase checkpoint control. The sequence is that of Protein sum2 (sum2) from Schizosaccharomyces pombe (strain 972 / ATCC 24843) (Fission yeast).